Consider the following 785-residue polypeptide: Semaphorin-3E (785 aa).

An N-terminal signal peptide occupies residues 1 to 25 (MLGRMASAQDLLILALCGLLLELPA). The 485-residue stretch at 36–520 (RLRLSHKELW…TESVIAQVKF (485 aa)) folds into the Sema domain. Asn48 carries N-linked (GlcNAc...) asparagine glycosylation. A disulfide bridge connects residues Cys109 and Cys119. A glycan (N-linked (GlcNAc...) asparagine) is linked at Asn130. Intrachain disulfides connect Cys137–Cys146, Cys274–Cys386, Cys298–Cys346, and Cys523–Cys541. N-linked (GlcNAc...) asparagine glycosylation is present at Asn600. An Ig-like C2-type domain is found at 651–740 (LDAGTYFCQT…EYCEKVWCTD (90 aa)). Cysteines 658 and 733 form a disulfide. A disordered region spans residues 744–785 (KKLKMSPSKWKYANPQEKRQDQEKKARIRPEHYRLPRNIADS). Residues 759–777 (QEKRQDQEKKARIRPEHYR) are compositionally biased toward basic and acidic residues.

The protein belongs to the semaphorin family. Collapsin-1, -2, -3, and -5 bind to overlapping but distinct axon tracts.

The protein resides in the secreted. Functionally, plays an important role in signaling via the cell surface receptor PLXND1. Mediates reorganization of the actin cytoskeleton, leading to the retraction of cell projections. Promotes focal adhesion disassembly and inhibits adhesion of endothelial cells to the extracellular matrix. Regulates angiogenesis. Can down-regulate sprouting angiogenesis. Required for normal vascular patterning during embryogenesis. Induces the collapse and paralysis of neuronal growth cones. Plays an important role in ensuring the specificity of synapse formation. This is Semaphorin-3E (SEMA3E) from Gallus gallus (Chicken).